Here is a 379-residue protein sequence, read N- to C-terminus: Cytochrome b (379 aa).

4 helical membrane passes run 33–53 (FGSLLGACLTIQIITGLFLAM), 77–98 (WTIRYLHANGASMFFLCLFIHV), 113–133 (WNVGITLLFSVMATAFMGYVL), and 178–198 (FFALHFILPFITSALVMIHLL). Positions 83 and 97 each coordinate heme b. 2 residues coordinate heme b: His-182 and His-196. His-201 contributes to the a ubiquinone binding site. 4 helical membrane passes run 226-246 (TKDFLGLLLLILLLMTMALFY), 288-308 (LGGVMALILSILILVMFPFLQ), 320-340 (LSQFLFWILVADLLTLTWIGG), and 347-367 (FINIGQMASMLYFSLMIFIMP).

It belongs to the cytochrome b family. In terms of assembly, the cytochrome bc1 complex contains 11 subunits: 3 respiratory subunits (MT-CYB, CYC1 and UQCRFS1), 2 core proteins (UQCRC1 and UQCRC2) and 6 low-molecular weight proteins (UQCRH/QCR6, UQCRB/QCR7, UQCRQ/QCR8, UQCR10/QCR9, UQCR11/QCR10 and a cleavage product of UQCRFS1). This cytochrome bc1 complex then forms a dimer. Heme b is required as a cofactor.

The protein localises to the mitochondrion inner membrane. In terms of biological role, component of the ubiquinol-cytochrome c reductase complex (complex III or cytochrome b-c1 complex) that is part of the mitochondrial respiratory chain. The b-c1 complex mediates electron transfer from ubiquinol to cytochrome c. Contributes to the generation of a proton gradient across the mitochondrial membrane that is then used for ATP synthesis. This chain is Cytochrome b (MT-CYB), found in Lepilemur sahamalazensis (Sahamalaza sportive lemur).